Reading from the N-terminus, the 313-residue chain is Type II restriction enzyme BsuMI component YdiR (313 aa).

Positions 289-313 are disordered; it reads FVSGDIVDENATTSSDDLPEDFENN.

BsuMI restriction activity requires YdiR, YdiS and YdjA.

The catalysed reaction is Endonucleolytic cleavage of DNA to give specific double-stranded fragments with terminal 5'-phosphates.. A P subtype restriction enzyme that recognizes the double-stranded sequence 5'-CTCGAG-3'; the cleavage site is unknown. The chain is Type II restriction enzyme BsuMI component YdiR (ydiR) from Bacillus subtilis (strain 168).